The sequence spans 196 residues: Carnitine operon protein CaiE (196 aa).

The disordered stretch occupies residues 176–196 (LRQMEENRPRLQGTTDVAPKR).

It belongs to the transferase hexapeptide repeat family.

Its pathway is amine and polyamine metabolism; carnitine metabolism. In terms of biological role, overproduction of CaiE stimulates the activity of CaiB and CaiD. The polypeptide is Carnitine operon protein CaiE (Escherichia fergusonii (strain ATCC 35469 / DSM 13698 / CCUG 18766 / IAM 14443 / JCM 21226 / LMG 7866 / NBRC 102419 / NCTC 12128 / CDC 0568-73)).